Reading from the N-terminus, the 202-residue chain is MVTMYFFTLSFGTVASGIMVISALNPVHSVFWLVVAFISSAALFILLGVDFIALMFIIIYVGAIAILFLFVIMMLNLTDFTPAFRRGGEADMTNYVPIGLAVGTLFFEAIASSWLIMGGPYVYRGLLGAWDLANPWFLKKYHNIEAIGRILYTDCYYLFILVSFILLVAMLGAIVLTQEIGTEIGPTAKKQDIFVQTSRAQV.

The next 5 helical transmembrane spans lie at 1 to 21 (MVTM…IMVI), 29 to 49 (SVFW…LLGV), 52 to 72 (IALM…LFVI), 96 to 116 (VPIG…SWLI), and 156 to 176 (YYLF…AIVL).

The protein belongs to the complex I subunit 6 family.

The protein localises to the mitochondrion membrane. The catalysed reaction is a ubiquinone + NADH + 5 H(+)(in) = a ubiquinol + NAD(+) + 4 H(+)(out). In terms of biological role, core subunit of the mitochondrial membrane respiratory chain NADH dehydrogenase (Complex I) that is believed to belong to the minimal assembly required for catalysis. Complex I functions in the transfer of electrons from NADH to the respiratory chain. The immediate electron acceptor for the enzyme is believed to be ubiquinone. The polypeptide is NADH-ubiquinone oxidoreductase chain 6 (ND6) (Metridium senile (Brown sea anemone)).